The chain runs to 85 residues: Splicing factor 3B subunit 5 (85 aa).

Belongs to the SF3B5 family. As to quaternary structure, component of the SF3B complex. SF3B complex associates with the splicing factor SF3A complex and a 12S RNA unit to form the U2 small nuclear ribonucleoproteins complex (U2 snRNP). Identified in the SAGA transcription regulatory histone acetylation (HAT) complex; the interaction is RNA-independent.

The protein resides in the nucleus. Involved in pre-mRNA splicing as component of spliceosome. As part of the spliceosome complex, plays a role in the regulation of spermatogonial differentiation. When associated with the SAGA transcription regulatory histone acetylation (HAT) complex, might be involved in the transcriptional activation of a subset of SAGA-regulated genes. The chain is Splicing factor 3B subunit 5 from Drosophila melanogaster (Fruit fly).